The chain runs to 1066 residues: Elongation factor 3 (1066 aa).

HEAT repeat units lie at residues 112–149 (FIFENVLNSLVEAMGDKEKAVQKASLETLKAFVRVMSP), 151–188 (AAQQVLKVVLHQARTAGKWQVKTGCVALLEEMVTACPE), 192–229 (ALMPEIIPVMTEVIWDTKTDVQKASRAALTKLCALISN), 231–268 (DIERFIPALINSLIHPVEEVPKTIQLLSATTFVQEVDS), 269–306 (ATLALMVPLLSRGLNERPTATKRKVAVIIDNMTKLVDN), and 312–353 (PFLG…VTGD). Residue threonine 418 coordinates ADP. 2 ABC transporter domains span residues 454 to 672 (EEGE…YAEL) and 699 to 1015 (IKMK…KKEE). 4 residues coordinate ADP: asparagine 735, glutamate 944, asparagine 947, and histidine 973. The tract at residues 997-1066 (GHDWTESNSK…YDSADELEDL (70 aa)) is disordered. A compositionally biased stretch (basic residues) spans 1042–1054 (RKAKKDRMARKKA).

This sequence belongs to the ABC transporter superfamily. ABCF family. EF3 subfamily.

The protein resides in the cytoplasm. It is found in the cytosol. The catalysed reaction is ATP + H2O = ADP + phosphate + H(+). It participates in protein biosynthesis; polypeptide chain elongation. Ribosome-dependent ATPase that functions in cytoplasmic translation elongation. Required for the ATP-dependent release of deacylated tRNA from the ribosomal E-site during protein biosynthesis. Stimulates the eEF1A-dependent binding of aminoacyl-tRNA to the ribosomal A-site, which has reduced affinity for tRNA as long as the E-site is occupied. Assists translation termination by stimulating the release of nascent protein from the ribosome by release factors. This chain is Elongation factor 3, found in Mycosarcoma maydis (Corn smut fungus).